The sequence spans 664 residues: Pentatricopeptide repeat-containing protein At1g10910, chloroplastic (664 aa).

A chloroplast-targeting transit peptide spans 1-72 (METPLLVGLE…KRHSNSYLAR (72 aa)). PPR repeat units follow at residues 165–199 (NVYI…GLKP), 200–235 (DVVT…GIQM), 236–270 (DSVM…GHSP), 271–305 (NIYH…GLVP), 306–340 (NKVM…GYAE), 341–375 (NEMP…GVRS), 376–406 (DGYA…SETT), 411–445 (DLVM…AVSP), and 446–480 (DYNT…GHRL).

This sequence belongs to the PPR family. P subfamily.

The protein localises to the plastid. The protein resides in the chloroplast. This is Pentatricopeptide repeat-containing protein At1g10910, chloroplastic from Arabidopsis thaliana (Mouse-ear cress).